Here is a 505-residue protein sequence, read N- to C-terminus: Protein disulfide-isomerase A3 (505 aa).

The first 24 residues, Met-1–Ala-24, serve as a signal peptide directing secretion. A Thioredoxin 1 domain is found at Ser-25–Gly-133. Catalysis depends on nucleophile residues Cys-57 and Cys-60. The cysteines at positions 57 and 60 are disulfide-linked. Lys-61 is modified (N6-methyllysine). Cys-85 and Cys-92 are oxidised to a cystine. Lys-129 bears the N6-succinyllysine mark. Lys-152 is modified (N6-acetyllysine). Residue Lys-218 is modified to N6-succinyllysine. N6-acetyllysine is present on Lys-252. A Phosphothreonine modification is found at Thr-319. One can recognise a Thioredoxin 2 domain in the interval Ser-343–Thr-485. Position 362 is an N6-acetyllysine (Lys-362). Residues Cys-406 and Cys-409 each act as nucleophile in the active site. Cys-406 and Cys-409 form a disulfide bridge. The segment at Ala-484–Leu-505 is disordered. Positions Gln-491–Leu-505 are enriched in basic and acidic residues. Lys-494 is modified (N6-acetyllysine). Residues Gln-502–Leu-505 carry the Prevents secretion from ER motif.

Belongs to the protein disulfide isomerase family. As to quaternary structure, part of the major histocompatibility complex class I (MHC I) peptide loading complex composed of TAP1, TAP2, B2M, MHC heavy chain, TAPBP, PDIA3, and CALR. Interacts with ERP27 and CANX. Interacts with SERPINA2 and with SERPINA1. Interacts with ATP2A2. Within the major histocompatibility complex class I (MHC I) peptide loading complex forms reversible disulfide-linked heterodimers with TAPBP as part of its protein folding chaperone activity. This is essential to assist the dynamic assembly of the MHC I complex with high affinity antigens in the endoplasmic reticulum. Post-translationally, phosphorylated.

It is found in the endoplasmic reticulum. Its subcellular location is the endoplasmic reticulum lumen. The protein resides in the melanosome. The catalysed reaction is Catalyzes the rearrangement of -S-S- bonds in proteins.. Its function is as follows. Protein disulfide isomerase that catalyzes the formation, isomerization, and reduction or oxidation of disulfide bonds in client proteins and functions as a protein folding chaperone. Core component of the major histocompatibility complex class I (MHC I) peptide loading complex where it functions as an essential folding chaperone for TAPBP. Through TAPBP, assists the dynamic assembly of the MHC I complex with high affinity antigens in the endoplasmic reticulum. Therefore, plays a crucial role in the presentation of antigens to cytotoxic T cells in adaptive immunity. In Chlorocebus aethiops (Green monkey), this protein is Protein disulfide-isomerase A3 (PDIA3).